The chain runs to 388 residues: Chorismate synthase (388 aa).

Arginine 39 and arginine 45 together coordinate NADP(+). FMN-binding positions include 130–132 (RSS), 251–252 (NA), glycine 296, 311–315 (KPIPT), and arginine 337.

Belongs to the chorismate synthase family. In terms of assembly, homotetramer. Requires FMNH2 as cofactor.

The catalysed reaction is 5-O-(1-carboxyvinyl)-3-phosphoshikimate = chorismate + phosphate. Its pathway is metabolic intermediate biosynthesis; chorismate biosynthesis; chorismate from D-erythrose 4-phosphate and phosphoenolpyruvate: step 7/7. In terms of biological role, catalyzes the anti-1,4-elimination of the C-3 phosphate and the C-6 proR hydrogen from 5-enolpyruvylshikimate-3-phosphate (EPSP) to yield chorismate, which is the branch point compound that serves as the starting substrate for the three terminal pathways of aromatic amino acid biosynthesis. This reaction introduces a second double bond into the aromatic ring system. The polypeptide is Chorismate synthase (Streptococcus pyogenes serotype M3 (strain SSI-1)).